The primary structure comprises 248 residues: Mannosylfructose-phosphate phosphatase (248 aa).

This sequence belongs to the sucrose phosphatase family.

The catalysed reaction is beta-D-fructofuranosyl alpha-D-mannopyranoside 6(F)-phosphate + H2O = beta-D-fructofuranosyl alpha-D-mannopyranoside + phosphate. It participates in carbohydrate metabolism; mannosylfructose biosynthesis; beta-D-fructofuranosyl alpha-D-mannopyranoside from D-fructose 6-phosphate and GDP-alpha-D-mannose: step 2/2. With respect to regulation, inhibited by the phosphatase inhibitors fluoride, molybdate and orthovanadate. The polypeptide is Mannosylfructose-phosphate phosphatase (Agrobacterium fabrum (strain C58 / ATCC 33970) (Agrobacterium tumefaciens (strain C58))).